The following is a 1956-amino-acid chain: Histone-lysine N-methyltransferase SETD1B (1956 aa).

Positions 1–20 (MSFKEAKPGERGKNPEDHGR) are enriched in basic and acidic residues. Residues 1-46 (MSFKEAKPGERGKNPEDHGRKQTASWINGMEAGNQPSTSGEKKSHH) form a disordered region. The 89-residue stretch at 111–199 (DEFYVGPVPP…NIIHVELDTK (89 aa)) folds into the RRM domain. 9 disordered regions span residues 226–478 (LDAS…LEAE), 502–637 (IAGD…VTPS), 662–696 (GFPPLPPPPPPQPGFPMPPPLPPPPPPTHPSVTVP), 926–1148 (KEPP…DEMQ), 1341–1386 (EDLP…TLTS), 1420–1464 (PTFP…VPSP), 1512–1553 (HLTS…NYET), 1627–1655 (TKHKKSRNSRHNNRYDEFSTVPSPEFSPP), and 1766–1790 (IDTQGKSIPAQPQASTRAGSERRSE). Composition is skewed to polar residues over residues 254 to 290 (VTPNSSTPFSHDTAYSSSRQGTPNSYSQFTPQSQGTP), 298 to 312 (PFSQDSSYSSRQTTP), and 346 to 361 (SSGSYRGTEHTFNVTR). Positions 363 to 373 (QPEPVQVPRTP) are enriched in pro residues. Polar residues-rich tracts occupy residues 375–407 (LSHSSGNYKSAFSPYQGNTVFPQTDESQYPQTS), 416–432 (GPQTSDSYSDAGCNSAS), and 451–464 (DSTTEQKASFSQTP). Residues 517–527 (SPISSSSSQLS) are compositionally biased toward low complexity. 2 stretches are compositionally biased toward polar residues: residues 535 to 551 (GSRYQDVTPSSRPSSTG) and 575 to 593 (SLCQNSRSASPIDQINQSG). The segment covering 594 to 605 (RKTESLDKKELV) has biased composition (basic and acidic residues). The segment covering 625–634 (EDMEISDDEV) has biased composition (acidic residues). Residues 986–1000 (SEGEEEVESEGDDGE) are compositionally biased toward acidic residues. Residues 1001–1011 (TSDKEDSSSEK) show a composition bias toward basic and acidic residues. The span at 1068–1122 (DSSDESEESSEYESSSDSDEKEEEDDEEEELVFGDDQSEDQDLGQEYEVETDREE) shows a compositional bias: acidic residues. The span at 1341–1352 (EDLPRTPGRDIV) shows a compositional bias: basic and acidic residues. Polar residues-rich tracts occupy residues 1358–1367 (LGKSQSTETV) and 1450–1462 (EPTSASLTMNSVP). Over residues 1541–1551 (SAHEFETEKNY) the composition is skewed to basic and acidic residues. The segment covering 1628-1638 (KHKKSRNSRHN) has biased composition (basic residues). Residues 1769 to 1783 (QGKSIPAQPQASTRA) are compositionally biased toward polar residues. Positions 1788–1793 (RSEQRR) match the RxxxRR motif motif. The region spanning 1817–1934 (KKLRFCKSHI…VNEEITYDYK (118 aa)) is the SET domain. Tyr1933 contacts S-adenosyl-L-methionine. Positions 1940 to 1956 (VKIPCLCGAENCRGTLN) constitute a Post-SET domain.

The protein belongs to the class V-like SAM-binding methyltransferase superfamily. As to quaternary structure, component of the SET1B/COMPASS complex.

It localises to the nucleus speckle. Its subcellular location is the chromosome. It catalyses the reaction L-lysyl(4)-[histone H3] + 3 S-adenosyl-L-methionine = N(6),N(6),N(6)-trimethyl-L-lysyl(4)-[histone H3] + 3 S-adenosyl-L-homocysteine + 3 H(+). Histone methyltransferase that specifically methylates 'Lys-4' of histone H3, when part of the SET1 histone methyltransferase (HMT) complex, but not if the neighboring 'Lys-9' residue is already methylated. H3 'Lys-4' methylation represents a specific tag for epigenetic transcriptional activation. The sequence is that of Histone-lysine N-methyltransferase SETD1B (setd1b) from Xenopus tropicalis (Western clawed frog).